The primary structure comprises 420 residues: Gamma-glutamyl phosphate reductase (420 aa).

The protein belongs to the gamma-glutamyl phosphate reductase family.

The protein resides in the cytoplasm. The enzyme catalyses L-glutamate 5-semialdehyde + phosphate + NADP(+) = L-glutamyl 5-phosphate + NADPH + H(+). It functions in the pathway amino-acid biosynthesis; L-proline biosynthesis; L-glutamate 5-semialdehyde from L-glutamate: step 2/2. In terms of biological role, catalyzes the NADPH-dependent reduction of L-glutamate 5-phosphate into L-glutamate 5-semialdehyde and phosphate. The product spontaneously undergoes cyclization to form 1-pyrroline-5-carboxylate. The polypeptide is Gamma-glutamyl phosphate reductase (Streptococcus pneumoniae (strain P1031)).